Consider the following 132-residue polypeptide: Large ribosomal subunit protein uL14 (132 aa).

This sequence belongs to the universal ribosomal protein uL14 family. As to quaternary structure, part of the 50S ribosomal subunit. Forms a cluster with proteins L3 and L24e, part of which may contact the 16S rRNA in 2 intersubunit bridges.

Binds to 23S rRNA. Forms part of two intersubunit bridges in the 70S ribosome. The protein is Large ribosomal subunit protein uL14 of Methanocorpusculum labreanum (strain ATCC 43576 / DSM 4855 / Z).